A 249-amino-acid polypeptide reads, in one-letter code: Adenosylcobinamide-GDP ribazoletransferase (249 aa).

Helical transmembrane passes span 32–52 (MVAF…TWFG), 53–73 (ATWL…WGAI), 107–127 (IGTM…LFVL), 136–156 (ALIV…FWFP), 190–210 (LLWW…IIIA), and 224–244 (TYGA…AALV).

It belongs to the CobS family. Mg(2+) is required as a cofactor.

It localises to the cell membrane. It carries out the reaction alpha-ribazole + adenosylcob(III)inamide-GDP = adenosylcob(III)alamin + GMP + H(+). It catalyses the reaction alpha-ribazole 5'-phosphate + adenosylcob(III)inamide-GDP = adenosylcob(III)alamin 5'-phosphate + GMP + H(+). Its pathway is cofactor biosynthesis; adenosylcobalamin biosynthesis; adenosylcobalamin from cob(II)yrinate a,c-diamide: step 7/7. Functionally, joins adenosylcobinamide-GDP and alpha-ribazole to generate adenosylcobalamin (Ado-cobalamin). Also synthesizes adenosylcobalamin 5'-phosphate from adenosylcobinamide-GDP and alpha-ribazole 5'-phosphate. The chain is Adenosylcobinamide-GDP ribazoletransferase from Herpetosiphon aurantiacus (strain ATCC 23779 / DSM 785 / 114-95).